Consider the following 114-residue polypeptide: UPF0342 protein SERP1381 (114 aa).

This sequence belongs to the UPF0342 family.

The protein is UPF0342 protein SERP1381 of Staphylococcus epidermidis (strain ATCC 35984 / DSM 28319 / BCRC 17069 / CCUG 31568 / BM 3577 / RP62A).